Consider the following 651-residue polypeptide: Peptide-N(4)-(N-acetyl-beta-glucosaminyl)asparagine amidase (651 aa).

An N-acetylalanine modification is found at alanine 2. Positions 30–91 (EASKLLLTYA…EGETHLIFPK (62 aa)) constitute a PUB domain. Cysteine 247, cysteine 250, cysteine 280, and cysteine 283 together coordinate Zn(2+). Cysteine 306 (nucleophile) is an active-site residue. Residues histidine 333 and aspartate 350 contribute to the active site. Residues 451–651 (ELGGRVSGSL…LEIIITFNDL (201 aa)) enclose the PAW domain.

This sequence belongs to the transglutaminase-like superfamily. PNGase family. Component of a complex required to couple retrotranslocation, ubiquitination and deglycosylation composed of NGLY1, SAKS1, AMFR, VCP and RAD23B. Interacts with the proteasome components RAD23B and PSMC1. Interacts with directly with VCP. Interacts with DERL1, bringing it close to the endoplasmic reticulum membrane. Interacts with SAKS1. The cofactor is Zn(2+). As to expression, ubiquitously expressed with highest level in testis.

It localises to the cytoplasm. It catalyses the reaction Hydrolysis of an N(4)-(acetyl-beta-D-glucosaminyl)asparagine residue in which the glucosamine residue may be further glycosylated, to yield a (substituted) N-acetyl-beta-D-glucosaminylamine and a peptide containing an aspartate residue.. With respect to regulation, inhibited by Z-VAD-fmk, a well-known caspase inhibitor, which inhibits enzyme activity through covalent binding of the carbohydrate to the single Cys-306 residue. Functionally, specifically deglycosylates the denatured form of N-linked glycoproteins in the cytoplasm and assists their proteasome-mediated degradation. Cleaves the beta-aspartyl-glucosamine (GlcNAc) of the glycan and the amide side chain of Asn, converting Asn to Asp. Prefers proteins containing high-mannose over those bearing complex type oligosaccharides. Can recognize misfolded proteins in the endoplasmic reticulum that are exported to the cytosol to be destroyed and deglycosylate them, while it has no activity toward native proteins. Deglycosylation is a prerequisite for subsequent proteasome-mediated degradation of some, but not all, misfolded glycoproteins. This Mus musculus (Mouse) protein is Peptide-N(4)-(N-acetyl-beta-glucosaminyl)asparagine amidase (Ngly1).